The following is a 91-amino-acid chain: Probable Fe(2+)-trafficking protein (91 aa).

It belongs to the Fe(2+)-trafficking protein family.

Could be a mediator in iron transactions between iron acquisition and iron-requiring processes, such as synthesis and/or repair of Fe-S clusters in biosynthetic enzymes. The sequence is that of Probable Fe(2+)-trafficking protein from Thiobacillus denitrificans (strain ATCC 25259 / T1).